The sequence spans 525 residues: GMP synthase [glutamine-hydrolyzing] (525 aa).

Residues 9–207 (RILILDFGSQ…VVDICKCEKL (199 aa)) form the Glutamine amidotransferase type-1 domain. The Nucleophile role is filled by C86. Catalysis depends on residues H181 and E183. The GMPS ATP-PPase domain occupies 208-400 (WTSASIIDDA…LGLPYDMLYR (193 aa)). 235–241 (SGGVDSS) serves as a coordination point for ATP.

In terms of assembly, homodimer.

It catalyses the reaction XMP + L-glutamine + ATP + H2O = GMP + L-glutamate + AMP + diphosphate + 2 H(+). The protein operates within purine metabolism; GMP biosynthesis; GMP from XMP (L-Gln route): step 1/1. In terms of biological role, catalyzes the synthesis of GMP from XMP. The polypeptide is GMP synthase [glutamine-hydrolyzing] (Colwellia psychrerythraea (strain 34H / ATCC BAA-681) (Vibrio psychroerythus)).